The sequence spans 419 residues: Light-independent protochlorophyllide reductase subunit N (419 aa).

The [4Fe-4S] cluster site is built by C17, C42, and C103.

Belongs to the BchN/ChlN family. As to quaternary structure, protochlorophyllide reductase is composed of three subunits; ChlL, ChlN and ChlB. Forms a heterotetramer of two ChlB and two ChlN subunits. It depends on [4Fe-4S] cluster as a cofactor.

The catalysed reaction is chlorophyllide a + oxidized 2[4Fe-4S]-[ferredoxin] + 2 ADP + 2 phosphate = protochlorophyllide a + reduced 2[4Fe-4S]-[ferredoxin] + 2 ATP + 2 H2O. It participates in porphyrin-containing compound metabolism; chlorophyll biosynthesis (light-independent). Functionally, component of the dark-operative protochlorophyllide reductase (DPOR) that uses Mg-ATP and reduced ferredoxin to reduce ring D of protochlorophyllide (Pchlide) to form chlorophyllide a (Chlide). This reaction is light-independent. The NB-protein (ChlN-ChlB) is the catalytic component of the complex. In Prochlorococcus marinus (strain NATL1A), this protein is Light-independent protochlorophyllide reductase subunit N.